The chain runs to 117 residues: Large ribosomal subunit protein bL20 (117 aa).

This sequence belongs to the bacterial ribosomal protein bL20 family.

In terms of biological role, binds directly to 23S ribosomal RNA and is necessary for the in vitro assembly process of the 50S ribosomal subunit. It is not involved in the protein synthesizing functions of that subunit. The protein is Large ribosomal subunit protein bL20 of Marinobacter nauticus (strain ATCC 700491 / DSM 11845 / VT8) (Marinobacter aquaeolei).